A 1250-amino-acid polypeptide reads, in one-letter code: DNA-directed RNA polymerase subunit beta (1250 aa).

A disordered region spans residues 1215 to 1250 (QDLNDDDINPDDTIDAELDDNLFDDDFDDTFDDDDL).

Belongs to the RNA polymerase beta chain family. In terms of assembly, the RNAP catalytic core consists of 2 alpha, 1 beta, 1 beta' and 1 omega subunit. When a sigma factor is associated with the core the holoenzyme is formed, which can initiate transcription.

It carries out the reaction RNA(n) + a ribonucleoside 5'-triphosphate = RNA(n+1) + diphosphate. In terms of biological role, DNA-dependent RNA polymerase catalyzes the transcription of DNA into RNA using the four ribonucleoside triphosphates as substrates. The polypeptide is DNA-directed RNA polymerase subunit beta (Acetivibrio thermocellus (strain ATCC 27405 / DSM 1237 / JCM 9322 / NBRC 103400 / NCIMB 10682 / NRRL B-4536 / VPI 7372) (Clostridium thermocellum)).